We begin with the raw amino-acid sequence, 303 residues long: Vesicle-trafficking protein SEC22c (303 aa).

Topologically, residues 1 to 183 (MSVIFFACVV…EPAPNFRMEP (183 aa)) are cytoplasmic. The Longin domain maps to 8–119 (CVVRVRDGLP…YAFLEFDSII (112 aa)). A helical transmembrane segment spans residues 184–204 (VTALGILSLILNIMCAALNLI). The Lumenal portion of the chain corresponds to 205–223 (RGVHLAEHSLQVAHEEIGN). A helical transmembrane segment spans residues 224 to 244 (ILAFLVPFVACIFQCYLYLFY). Topologically, residues 245-248 (SPAR) are cytoplasmic. The chain crosses the membrane as a helical span at residues 249-269 (TMKVVLMLLFICLGNMYLHGL). Position 270 (Arg270) is a topological domain, lumenal. A helical transmembrane segment spans residues 271–291 (NLWQILFHIGVAFLSSYQILT). The Cytoplasmic portion of the chain corresponds to 292–303 (RQLQEKQSDCGV).

This sequence belongs to the synaptobrevin family. In terms of tissue distribution, ubiquitously expressed.

The protein resides in the endoplasmic reticulum membrane. Its function is as follows. May be involved in vesicle transport between the ER and the Golgi complex. This Homo sapiens (Human) protein is Vesicle-trafficking protein SEC22c (SEC22C).